The primary structure comprises 154 residues: Large ribosomal subunit protein bL17 (154 aa).

Residues 125–154 (AASQKSSKQDRAKRVQGSKKNVDAVAESAE) are disordered.

It belongs to the bacterial ribosomal protein bL17 family. Part of the 50S ribosomal subunit. Contacts protein L32.

The chain is Large ribosomal subunit protein bL17 from Chlorobium chlorochromatii (strain CaD3).